The following is a 107-amino-acid chain: Large ribosomal subunit protein P1 (107 aa).

The tract at residues 67–107 (GAAPAAAAPAAGGAPAAGAAPKKEEKKEPSEEEDMGFSLFD) is disordered. The span at 69 to 86 (APAAAAPAAGGAPAAGAA) shows a compositional bias: low complexity.

It belongs to the eukaryotic ribosomal protein P1/P2 family. As to quaternary structure, P1 and P2 exist as dimers at the large ribosomal subunit.

In terms of biological role, plays an important role in the elongation step of protein synthesis. The protein is Large ribosomal subunit protein P1 of Chlamydomonas reinhardtii (Chlamydomonas smithii).